We begin with the raw amino-acid sequence, 642 residues long: G protein-coupled receptor kinase 1 (642 aa).

The interval 1–202 (MEIENIVANT…LEKRPVDKHT (202 aa)) is N-terminal. Residues 52–188 (YAFVVEKQPI…AESMYFHRFL (137 aa)) form the RGS domain. Residues 203-470 (FRLYRVLGKG…AEEIRAHPFF (268 aa)) enclose the Protein kinase domain. ATP-binding positions include 209–217 (LGKGGFGEV) and Lys-232. Asp-328 (proton acceptor) is an active-site residue. The region spanning 480–545 (EPVPWKKMEA…GCVSIPWQSE (66 aa)) is the AGC-kinase C-terminal domain. The segment at 612–642 (VEQQQPPKTSTQTPAVRSSRAASASGRTLVI) is disordered. The segment covering 614–636 (QQQPPKTSTQTPAVRSSRAASAS) has biased composition (low complexity).

This sequence belongs to the protein kinase superfamily. AGC Ser/Thr protein kinase family. GPRK subfamily.

The catalysed reaction is [G-protein-coupled receptor] + ATP = [G-protein-coupled receptor]-phosphate + ADP + H(+). Specifically phosphorylates the activated forms of G protein-coupled receptors. This chain is G protein-coupled receptor kinase 1 (grk-1), found in Caenorhabditis elegans.